The sequence spans 239 residues: Pyridoxine 5'-phosphate synthase (239 aa).

Asn-7 serves as a coordination point for 3-amino-2-oxopropyl phosphate. Asp-9–His-10 lines the 1-deoxy-D-xylulose 5-phosphate pocket. Position 18 (Arg-18) interacts with 3-amino-2-oxopropyl phosphate. His-43 acts as the Proton acceptor in catalysis. Arg-45 and His-50 together coordinate 1-deoxy-D-xylulose 5-phosphate. Glu-70 (proton acceptor) is an active-site residue. Thr-100 is a binding site for 1-deoxy-D-xylulose 5-phosphate. The Proton donor role is filled by His-191. 3-amino-2-oxopropyl phosphate contacts are provided by residues Gly-192 and Gly-213–His-214.

It belongs to the PNP synthase family. In terms of assembly, homooctamer; tetramer of dimers.

The protein localises to the cytoplasm. It carries out the reaction 3-amino-2-oxopropyl phosphate + 1-deoxy-D-xylulose 5-phosphate = pyridoxine 5'-phosphate + phosphate + 2 H2O + H(+). Its pathway is cofactor biosynthesis; pyridoxine 5'-phosphate biosynthesis; pyridoxine 5'-phosphate from D-erythrose 4-phosphate: step 5/5. Its function is as follows. Catalyzes the complicated ring closure reaction between the two acyclic compounds 1-deoxy-D-xylulose-5-phosphate (DXP) and 3-amino-2-oxopropyl phosphate (1-amino-acetone-3-phosphate or AAP) to form pyridoxine 5'-phosphate (PNP) and inorganic phosphate. This is Pyridoxine 5'-phosphate synthase from Desulforapulum autotrophicum (strain ATCC 43914 / DSM 3382 / VKM B-1955 / HRM2) (Desulfobacterium autotrophicum).